The chain runs to 193 residues: Bcl-2-binding component 3, isoforms 1/2 (193 aa).

Disordered stretches follow at residues 1–28 (MARA…FPLG) and 71–138 (ALGG…REIG). S10 carries the phosphoserine modification. Residues 71-82 (ALGGSRWPGGPR) are compositionally biased toward low complexity. The short motif at 137–151 (IGAQLRRMADDLNAQ) is the BH3 element.

The protein belongs to the Bcl-2 family. In terms of assembly, interacts with MCL1 and BCL2A1. Interacts (via BH3 domain) with BCL2. Interacts with BCL2L1/BCL-XL. Interacts (via BH3 domain) with NOL3/ARC (via CARD domain); this interaction prevents BBC3 association with BCL2 and results in CASP8 activation. In terms of tissue distribution, ubiquitously expressed.

It is found in the mitochondrion. In terms of biological role, essential mediator of p53/TP53-dependent and p53/TP53-independent apoptosis. Promotes partial unfolding of BCL2L1 and dissociation of BCL2L1 from p53/TP53, releasing the bound p53/TP53 to induce apoptosis. Regulates ER stress-induced neuronal apoptosis. The polypeptide is Bcl-2-binding component 3, isoforms 1/2 (BBC3) (Homo sapiens (Human)).